The chain runs to 831 residues: Glycerol-3-phosphate acyltransferase (831 aa).

The HXXXXD motif signature appears at 304 to 309; sequence CHRSHM. The disordered stretch occupies residues 801–831; that stretch reads VSMPAETSNQPEAPETPETPETPEPEGKTES.

The protein belongs to the GPAT/DAPAT family.

It is found in the cell inner membrane. It carries out the reaction sn-glycerol 3-phosphate + an acyl-CoA = a 1-acyl-sn-glycero-3-phosphate + CoA. It participates in phospholipid metabolism; CDP-diacylglycerol biosynthesis; CDP-diacylglycerol from sn-glycerol 3-phosphate: step 1/3. The protein is Glycerol-3-phosphate acyltransferase of Yersinia pseudotuberculosis serotype IB (strain PB1/+).